Here is a 264-residue protein sequence, read N- to C-terminus: MNIKEGKFLETILAEKKQEIAQMPDENSKPIRQTYRLYDYLKKHSDQLQVIAEVKKASPSLGDINLEVDIIAQAKNYEQAGAAMISVLTDPVFFKGNIEYLREISKNVQIPTLNKDFIIDKKQINRALNAGATVILLIVACFENDFEKLEELYNYAISLGLEVLVETHNKAELDRAHQLAAKIIGVNNRNLKTFEVSLQNSTDLVPYFKEENVYISESGIFGKKEAQKVAENFNGILVGTALMQANNLTKSLTDLKIKRKNDEH.

It belongs to the TrpC family.

It carries out the reaction 1-(2-carboxyphenylamino)-1-deoxy-D-ribulose 5-phosphate + H(+) = (1S,2R)-1-C-(indol-3-yl)glycerol 3-phosphate + CO2 + H2O. It functions in the pathway amino-acid biosynthesis; L-tryptophan biosynthesis; L-tryptophan from chorismate: step 4/5. The polypeptide is Indole-3-glycerol phosphate synthase (Lactococcus lactis subsp. cremoris (strain MG1363)).